A 423-amino-acid polypeptide reads, in one-letter code: Protein disulfide isomerase-like 5-2 (423 aa).

An N-terminal signal peptide occupies residues 1–35 (MAATTTRPLPLLLLLLLPPLLLLLLSFHAAAAAAA). In terms of domain architecture, Thioredoxin spans 36–149 (EEFPRDGRVI…LVRNLNKFVA (114 aa)). Residues Cys-71 and Cys-74 each act as nucleophile in the active site. A disulfide bridge links Cys-71 with Cys-74. Asn-181 carries N-linked (GlcNAc...) asparagine glycosylation. Residues 386–406 (LVSLNSLYILICVFALLGVMI) form a helical membrane-spanning segment.

This sequence belongs to the protein disulfide isomerase family.

It localises to the membrane. Its function is as follows. Acts as a protein-folding catalyst that interacts with nascent polypeptides to catalyze the formation, isomerization, and reduction or oxidation of disulfide bonds. May play a role in storage protein biogenesis. The polypeptide is Protein disulfide isomerase-like 5-2 (PDIL5-2) (Oryza sativa subsp. japonica (Rice)).